The sequence spans 412 residues: CHRNA7-FAM7A fusion protein (412 aa).

Helical transmembrane passes span 144-164 (GLNL…VFLL), 172-192 (ISLG…VAEI), 205-225 (QYFA…VIVL), 240-254 (WTRV…WFLR), and 380-400 (LCLM…LMSA).

Belongs to the ligand-gated ion channel (TC 1.A.9) family. In terms of tissue distribution, expressed in hippocampus.

The protein resides in the membrane. The protein is CHRNA7-FAM7A fusion protein (CHRFAM7A) of Homo sapiens (Human).